We begin with the raw amino-acid sequence, 135 residues long: Transcriptional activator protein (135 aa).

The short motif at 17 to 32 (KIQHHIAKKRQVRRRR) is the Nuclear localization signal element. The segment at 37–54 (CGCSYYIHLDCINHGFTH) is a zinc-finger region. A transactivation region spans residues 120–135 (HLDDLTVSDWSFFKSL).

This sequence belongs to the geminiviridae transcriptional activator protein family. Monomer. Homodimer. Homooligomer. Self-interaction correlates with nuclear localization and efficient activation of transcription. Monomers suppress local silencing by interacting with and inactivating host adenosine kinase 2 (ADK2) in the cytoplasm. Interacts with and inhibits host SNF1 kinase. Binds to ssDNA. May interact with host RPS27A. Phosphorylated.

The protein resides in the host nucleus. It is found in the host cytoplasm. Functionally, multifunctional protein that modulates host antiviral defenses and promotes host attractiveness to insect vectors. Acts as a suppressor of RNA-mediated gene silencing, also known as post-transcriptional gene silencing (PTGS), a mechanism of plant viral defense that limits the accumulation of viral RNAs. TrAP suppresses the host RNA silencing by inhibiting adenosine kinase 2 (ADK2), a kinase involved in a general methylation pathway. Also suppresses the host basal defense by interacting with and inhibiting SNF1 kinase, a key regulator of cell metabolism implicated in innate antiviral defense. Inhibits signal transduction by the phytohormone jasmonate, making the infected plant more attractive to aphids, which are the second host to play a role as a dissemination vector. Acts by binding to ubiquitin precursor RPS27A, thereby preventing ubiquitin degradation of JAZ. This chain is Transcriptional activator protein, found in Capsicum annuum (Capsicum pepper).